The following is a 230-amino-acid chain: Orotidine 5'-phosphate decarboxylase (230 aa).

Substrate contacts are provided by residues Asp-11, Lys-34, Asp-61–Thr-70, Thr-117, Arg-179, Gln-188, Gly-208, and Arg-209. Residue Lys-63 is the Proton donor of the active site.

The protein belongs to the OMP decarboxylase family. Type 1 subfamily. In terms of assembly, homodimer.

It carries out the reaction orotidine 5'-phosphate + H(+) = UMP + CO2. It participates in pyrimidine metabolism; UMP biosynthesis via de novo pathway; UMP from orotate: step 2/2. Functionally, catalyzes the decarboxylation of orotidine 5'-monophosphate (OMP) to uridine 5'-monophosphate (UMP). The sequence is that of Orotidine 5'-phosphate decarboxylase from Streptococcus uberis (strain ATCC BAA-854 / 0140J).